The sequence spans 100 residues: Putative pterin-4-alpha-carbinolamine dehydratase (100 aa).

The protein belongs to the pterin-4-alpha-carbinolamine dehydratase family.

It catalyses the reaction (4aS,6R)-4a-hydroxy-L-erythro-5,6,7,8-tetrahydrobiopterin = (6R)-L-erythro-6,7-dihydrobiopterin + H2O. This Alteromonas mediterranea (strain DSM 17117 / CIP 110805 / LMG 28347 / Deep ecotype) protein is Putative pterin-4-alpha-carbinolamine dehydratase.